A 360-amino-acid chain; its full sequence is MAAAVTAAVSLPYSNSTSLPIRTSIVAPERLVFKKVSLNNVSISGRVGTIRAQVTTEAPAKVVKHSKKQDENIVVNKFKPKEPYVGRCLLNTKITGDDAPGETWHMVFSTEGEVPYREGQSIGIVPDGIDKNGKPHKLRLYSIASSAIGDFGDSKTVSLCVKRLVYTNDAGEVVKGVCSNFLCDLKPGSEVKITGPVGKEMLMPKDPNATVIMLGTGTGIAPFRSFLWKMFFEKHEDYQFNGLAWLFLGVPTSSSLLYKEEFEKMKEKAPENFRLDFAVSREQVNDKGEKMYIQTRMAQYAEELWELLKKDNTFVYMCGLKGMEKGIDDIMVSLAAKDGIDWIEYKRTLKKAEQWNVEVY.

The transit peptide at 1 to 52 (MAAAVTAAVSLPYSNSTSLPIRTSIVAPERLVFKKVSLNNVSISGRVGTIRA) directs the protein to the chloroplast. Residues 81–203 (KEPYVGRCLL…TGPVGKEMLM (123 aa)) form the FAD-binding FR-type domain. Residues 139 to 142 (RLYS), 160 to 162 (CVK), Tyr-166, 177 to 179 (VCS), and Thr-218 each bind FAD. Residues Ser-142 and Lys-162 each coordinate NADP(+). NADP(+) is bound by residues Thr-218, 250-251 (VP), 280-281 (SR), Lys-290, 319-320 (GL), and Glu-358.

The protein belongs to the ferredoxin--NADP reductase type 1 family. Monomer. Interacts with TIC62 (via C-terminus). It depends on FAD as a cofactor.

It localises to the plastid. It is found in the chloroplast stroma. The protein localises to the chloroplast thylakoid membrane. The catalysed reaction is 2 reduced [2Fe-2S]-[ferredoxin] + NADP(+) + H(+) = 2 oxidized [2Fe-2S]-[ferredoxin] + NADPH. It participates in energy metabolism; photosynthesis. Functionally, may play a key role in regulating the relative amounts of cyclic and non-cyclic electron flow to meet the demands of the plant for ATP and reducing power. The chain is Ferredoxin--NADP reductase, leaf isozyme, chloroplastic (PETH) from Pisum sativum (Garden pea).